A 794-amino-acid polypeptide reads, in one-letter code: PAN2-PAN3 deadenylation complex subunit PAN3 (794 aa).

Residues 7-36 (SAKDVLCKNILIYGYCKFQDKGCAFSHNKQ) form a C3H1-type zinc finger. Disordered stretches follow at residues 40-97 (PQQQ…TQSK) and 187-226 (AQVG…QQQL). 2 stretches are compositionally biased toward polar residues: residues 83–94 (IQSNGMVNSQET) and 189–199 (VGNNPGSTAPA). Low complexity predominate over residues 200 to 226 (NLQLQQKQPQQPQQPQQPQQHQQQQQL). The tract at residues 372-668 (QTMQHLSLPD…MDQFILQYIS (297 aa)) is pseudokinase domain. ATP contacts are provided by residues Arg-425 and 494–501 (DYYPNLTT). Residues 669–707 (SHFMTLMNKLQNSHDWVELQLSTELENARLFRLMTKINF) are a coiled coil. The tract at residues 708–794 (IISEMPTYDL…IDTQFRLLRG (87 aa)) is knob domain.

Belongs to the protein kinase superfamily. PAN3 family. In terms of assembly, homodimer. Forms a heterotrimer with a catalytic subunit PAN2 to form the poly(A)-nuclease (PAN) deadenylation complex. Interacts (via PAM-2 motif) with poly(A)-binding protein PAB1 (via PABC domain), conferring substrate specificity of the enzyme complex.

Its subcellular location is the cytoplasm. Its function is as follows. Regulatory subunit of the poly(A)-nuclease (PAN) deadenylation complex, one of two cytoplasmic mRNA deadenylases involved in mRNA turnover. PAN specifically shortens poly(A) tails of RNA and the activity is stimulated by poly(A)-binding protein PAB1. PAN deadenylation is followed by rapid degradation of the shortened mRNA tails by the CCR4-NOT complex. Deadenylated mRNAs are then degraded by two alternative mechanisms, namely exosome-mediated 3'-5' exonucleolytic degradation, or deadenylation-dependent mRNA decaping and subsequent 5'-3' exonucleolytic degradation by XRN1. May also be involved in post-transcriptional maturation of mRNA poly(A) tails. PAN3 acts as a positive regulator for PAN activity, recruiting the catalytic subunit PAN2 to mRNA via its interaction with RNA and with PAB1. This chain is PAN2-PAN3 deadenylation complex subunit PAN3, found in Lodderomyces elongisporus (strain ATCC 11503 / CBS 2605 / JCM 1781 / NBRC 1676 / NRRL YB-4239) (Yeast).